Consider the following 109-residue polypeptide: Spermidine export protein MdtI (109 aa).

4 helical membrane passes run 6 to 26 (WIHAAWLAFAIVLEIIANVFL), 36 to 56 (WFGLLSIAAVLGAFSALSQAV), 64 to 84 (AYALWGGFGIAATLAAGWVLF), and 88 to 108 (LNRKGWIGLVLLLAGMVMIKL).

Belongs to the drug/metabolite transporter (DMT) superfamily. Small multidrug resistance (SMR) (TC 2.A.7.1) family. MdtI subfamily. In terms of assembly, forms a complex with MdtJ.

It localises to the cell inner membrane. Functionally, catalyzes the excretion of spermidine. The protein is Spermidine export protein MdtI of Enterobacter sp. (strain 638).